A 524-amino-acid polypeptide reads, in one-letter code: Lysine--tRNA ligase (524 aa).

Residues Glu-431 and Glu-438 each contribute to the Mg(2+) site.

This sequence belongs to the class-II aminoacyl-tRNA synthetase family. As to quaternary structure, homodimer. Mg(2+) serves as cofactor.

The protein localises to the cytoplasm. It carries out the reaction tRNA(Lys) + L-lysine + ATP = L-lysyl-tRNA(Lys) + AMP + diphosphate. The protein is Lysine--tRNA ligase (lysS) of Chlamydia muridarum (strain MoPn / Nigg).